The primary structure comprises 308 residues: Elongation factor Ts (308 aa).

The segment at 79–82 (TDFV) is involved in Mg(2+) ion dislocation from EF-Tu.

Belongs to the EF-Ts family.

The protein localises to the cytoplasm. Its function is as follows. Associates with the EF-Tu.GDP complex and induces the exchange of GDP to GTP. It remains bound to the aminoacyl-tRNA.EF-Tu.GTP complex up to the GTP hydrolysis stage on the ribosome. The polypeptide is Elongation factor Ts (Bdellovibrio bacteriovorus (strain ATCC 15356 / DSM 50701 / NCIMB 9529 / HD100)).